Here is a 299-residue protein sequence, read N- to C-terminus: Putative peptidyl-prolyl cis-trans isomerase jhp_0161 (299 aa).

Residues 1 to 21 (MKKNILNLALVGALSASFLMA) form the signal peptide. Positions 154 to 253 (KQEAHARHIL…FGYHIIYLIS (100 aa)) constitute a PpiC domain.

The enzyme catalyses [protein]-peptidylproline (omega=180) = [protein]-peptidylproline (omega=0). In Helicobacter pylori (strain J99 / ATCC 700824) (Campylobacter pylori J99), this protein is Putative peptidyl-prolyl cis-trans isomerase jhp_0161.